A 440-amino-acid chain; its full sequence is Thymidine phosphorylase (440 aa).

It belongs to the thymidine/pyrimidine-nucleoside phosphorylase family. As to quaternary structure, homodimer.

The catalysed reaction is thymidine + phosphate = 2-deoxy-alpha-D-ribose 1-phosphate + thymine. Its pathway is pyrimidine metabolism; dTMP biosynthesis via salvage pathway; dTMP from thymine: step 1/2. In terms of biological role, the enzymes which catalyze the reversible phosphorolysis of pyrimidine nucleosides are involved in the degradation of these compounds and in their utilization as carbon and energy sources, or in the rescue of pyrimidine bases for nucleotide synthesis. The sequence is that of Thymidine phosphorylase from Erwinia tasmaniensis (strain DSM 17950 / CFBP 7177 / CIP 109463 / NCPPB 4357 / Et1/99).